Reading from the N-terminus, the 583-residue chain is SHC-transforming protein 1 (583 aa).

An N-acetylmethionine modification is found at M1. A disordered region spans residues M1–E92. The segment covering E16–P44 has biased composition (low complexity). 2 positions are modified to phosphoserine: S36 and S139. Position 154 is an N6-acetyllysine (K154). The PID domain occupies M156–E339. The interval E340–P487 is CH1. A phosphotyrosine mark is found at Y349 and Y350. Over residues A372–A384 the composition is skewed to low complexity. Residues A372–P415 form a disordered region. At Y427 the chain carries Phosphotyrosine. Residue S453 is modified to Phosphoserine. The region spanning W488–V579 is the SH2 domain.

In terms of assembly, interacts with CPNE3; this interaction may mediate the binding of CPNE3 with ERBB2. Interacts with the NPXY motif of tyrosine-phosphorylated IGF1R and INSR in vitro via the PID domain. Once activated, binds to GRB2. Interacts with tyrosine-phosphorylated CD3T and DDR2. Interacts with the N-terminal region of SH2B2. Interacts with phosphorylated LRP1 and IRS4. Interacts with INPP5D/SHIP1 and INPPL1/SHIP2. Interacts with TRIM31. Interacts with PTPN6/SHP (tyrosine phosphorylated). Identified in a complex containing FGFR4, NCAM1, CDH2, PLCG1, FRS2, SRC, SHC1, GAP43 and CTT. Interacts with ALK, GAB2, GRB7 and KIT. Interacts with FLT4 (tyrosine-phosphorylated). Interacts with EPHB1 and GRB2; activates the MAPK/ERK cascade to regulate cell migration. Interacts with PDGFRB (tyrosine-phosphorylated). Interacts with ERBB4. Interacts with TEK/TIE2 (tyrosine-phosphorylated). Interacts with the Trk receptors NTRK1, NTRK2 and NTRK3; in a phosphotyrosine-dependent manner. Interacts with PTK2/FAK1. Interacts with CEACAM1; this interaction is CEACAM1-phosphorylation-dependent and mediates interaction with EGFR or INSR resulting in decrease coupling of SHC1 to the MAPK3/ERK1-MAPK1/ERK2 pathway. Interacts (via PID domain) with PEAK1 (when phosphorylated at 'Tyr-1188'). Found in a complex with PPP1CA, PPP1CC, SHC1 and PEAK1. As to quaternary structure, (Microbial infection) Interacts with herpes simplex virus 1 UL46. Phosphorylated by activated epidermal growth factor receptor. Phosphorylated in response to FLT4 and KIT signaling. Isoform p46Shc and isoform p52Shc are phosphorylated on tyrosine residues of the Pro-rich domain. Isoform p66Shc is phosphorylated on Ser-36 by PRKCB upon treatment with insulin, hydrogen peroxide or irradiation with ultraviolet light. Tyrosine phosphorylated in response to FLT3 signaling. Tyrosine phosphorylated by activated PTK2B/PYK2. Tyrosine phosphorylated by ligand-activated ALK. Tyrosine phosphorylated by ligand-activated PDGFRB. Tyrosine phosphorylated by TEK/TIE2. May be tyrosine phosphorylated by activated PTK2/FAK1; tyrosine phosphorylation was seen in an astrocytoma biopsy, where PTK2/FAK1 kinase activity is high, but not in normal brain tissue. Isoform p52Shc dephosphorylation by PTPN2 may regulate interaction with GRB2. Widely expressed. Expressed in neural stem cells but absent in mature neurons.

It is found in the cytoplasm. It localises to the cell junction. The protein resides in the focal adhesion. Its subcellular location is the mitochondrion matrix. The protein localises to the mitochondrion. Functionally, signaling adapter that couples activated growth factor receptors to signaling pathways. Participates in a signaling cascade initiated by activated KIT and KITLG/SCF. Isoform p46Shc and isoform p52Shc, once phosphorylated, couple activated receptor tyrosine kinases to Ras via the recruitment of the GRB2/SOS complex and are implicated in the cytoplasmic propagation of mitogenic signals. Isoform p46Shc and isoform p52Shc may thus function as initiators of the Ras signaling cascade in various non-neuronal systems. Isoform p66Shc does not mediate Ras activation, but is involved in signal transduction pathways that regulate the cellular response to oxidative stress and life span. Isoform p66Shc acts as a downstream target of the tumor suppressor p53 and is indispensable for the ability of stress-activated p53 to induce elevation of intracellular oxidants, cytochrome c release and apoptosis. The expression of isoform p66Shc has been correlated with life span. Participates in signaling downstream of the angiopoietin receptor TEK/TIE2, and plays a role in the regulation of endothelial cell migration and sprouting angiogenesis. The sequence is that of SHC-transforming protein 1 (SHC1) from Homo sapiens (Human).